The following is a 2554-amino-acid chain: Protein sevenless (2554 aa).

Residues 1–10 (MTMFWQQNVD) are compositionally biased toward polar residues. The disordered stretch occupies residues 1-25 (MTMFWQQNVDHQSDEQDKQAKGAAP). The Extracellular portion of the chain corresponds to 1-2123 (MTMFWQQNVD…AEPFVSPEKR (2123 aa)). Over residues 11–20 (HQSDEQDKQA) the composition is skewed to basic and acidic residues. Asn-30 carries an N-linked (GlcNAc...) asparagine glycan. Residues 51–70 (NQQAPGTSSSSSNSQNASPS) are compositionally biased toward low complexity. Positions 51 to 75 (NQQAPGTSSSSSNSQNASPSKIVVR) are disordered. A glycan (N-linked (GlcNAc...) asparagine) is linked at Asn-129. Residues 181–208 (SRPQSTMAHHPDDRDRDRDPSEEQHGVD) form a disordered region. Positions 189–208 (HHPDDRDRDRDPSEEQHGVD) are enriched in basic and acidic residues. The Fibronectin type-III 1 domain maps to 440–533 (APVIEHLMGL…GFVQTHSARN (94 aa)). Residues Asn-481, Asn-505, Asn-617, and Asn-647 are each glycosylated (N-linked (GlcNAc...) asparagine). The Fibronectin type-III 2 domain maps to 824–924 (AGGKPHSLKA…EPLAARTWPL (101 aa)). A glycan (N-linked (GlcNAc...) asparagine) is linked at Asn-966. The stretch at 1010–1053 (GRVYWTDLARNCVVRMDPWSGSRELLPVFEANFLALDPRQGHLY) is one LDL-receptor class B repeat. Fibronectin type-III domains follow at residues 1202–1290 (LPDS…TPPV) and 1294–1397 (QPRR…VAPE). Asn-1228, Asn-1313, Asn-1353, Asn-1550, Asn-1557, Asn-1639, Asn-1725, Asn-1756, Asn-1804, Asn-1889, Asn-1947, and Asn-2073 each carry an N-linked (GlcNAc...) asparagine glycan. Fibronectin type-III domains follow at residues 1801–1901 (PPRN…SFAE), 1902–1988 (LPEL…VYET), and 1995–2117 (QPGK…AEPF). The chain crosses the membrane as a helical span at residues 2124 to 2147 (GSLVLAIIAPAAIVSSCVLALVLV). At 2148–2554 (RKVQKRRLRA…LYANEGVSRL (407 aa)) the chain is on the cytoplasmic side. The Protein kinase domain maps to 2209-2485 (LKLLRFLGSG…RCYNTLHAIS (277 aa)). ATP contacts are provided by residues 2215–2223 (LGSGAFGEV) and Lys-2242. Asp-2343 serves as the catalytic Proton acceptor. Position 2380 is a phosphotyrosine; by autocatalysis (Tyr-2380). The segment covering 2515–2527 (GQPLEEHREHNER) has biased composition (basic and acidic residues). A disordered region spans residues 2515-2534 (GQPLEEHREHNERPEDENLT).

It belongs to the protein kinase superfamily. Tyr protein kinase family. Insulin receptor subfamily. As to quaternary structure, may form a complex with drk and Sos. Binds the phosphotyrosine interaction domain (PID) of Dab.

It localises to the cell membrane. The enzyme catalyses L-tyrosyl-[protein] + ATP = O-phospho-L-tyrosyl-[protein] + ADP + H(+). Receptor for an extracellular signal required to instruct a cell to differentiate into an R7 photoreceptor. The ligand for sev is the boss (bride of sevenless) protein on the surface of the neighboring R8 cell. The sequence is that of Protein sevenless (sev) from Drosophila melanogaster (Fruit fly).